The sequence spans 308 residues: Ribosomal RNA small subunit methyltransferase H (308 aa).

Residues 36–38, D55, F86, D103, and Q110 contribute to the S-adenosyl-L-methionine site; that span reads GGH.

Belongs to the methyltransferase superfamily. RsmH family.

The protein resides in the cytoplasm. The catalysed reaction is cytidine(1402) in 16S rRNA + S-adenosyl-L-methionine = N(4)-methylcytidine(1402) in 16S rRNA + S-adenosyl-L-homocysteine + H(+). In terms of biological role, specifically methylates the N4 position of cytidine in position 1402 (C1402) of 16S rRNA. The protein is Ribosomal RNA small subunit methyltransferase H of Helicobacter pylori (strain G27).